We begin with the raw amino-acid sequence, 404 residues long: Probable tRNA sulfurtransferase (404 aa).

A THUMP domain is found at 60 to 165 (QPIVEALKLV…DEAAYISYEE (106 aa)). ATP-binding positions include 183 to 184 (ML), 208 to 209 (HF), R265, G287, and Q296.

This sequence belongs to the ThiI family.

It is found in the cytoplasm. It catalyses the reaction [ThiI sulfur-carrier protein]-S-sulfanyl-L-cysteine + a uridine in tRNA + 2 reduced [2Fe-2S]-[ferredoxin] + ATP + H(+) = [ThiI sulfur-carrier protein]-L-cysteine + a 4-thiouridine in tRNA + 2 oxidized [2Fe-2S]-[ferredoxin] + AMP + diphosphate. It carries out the reaction [ThiS sulfur-carrier protein]-C-terminal Gly-Gly-AMP + S-sulfanyl-L-cysteinyl-[cysteine desulfurase] + AH2 = [ThiS sulfur-carrier protein]-C-terminal-Gly-aminoethanethioate + L-cysteinyl-[cysteine desulfurase] + A + AMP + 2 H(+). The protein operates within cofactor biosynthesis; thiamine diphosphate biosynthesis. Catalyzes the ATP-dependent transfer of a sulfur to tRNA to produce 4-thiouridine in position 8 of tRNAs, which functions as a near-UV photosensor. Also catalyzes the transfer of sulfur to the sulfur carrier protein ThiS, forming ThiS-thiocarboxylate. This is a step in the synthesis of thiazole, in the thiamine biosynthesis pathway. The sulfur is donated as persulfide by IscS. This chain is Probable tRNA sulfurtransferase, found in Streptococcus pyogenes serotype M1.